The following is a 179-amino-acid chain: ATP synthase subunit b (179 aa).

The chain crosses the membrane as a helical span at residues 27 to 47 (TAITFLVMLAVLAKFAWGPIV).

This sequence belongs to the ATPase B chain family. As to quaternary structure, F-type ATPases have 2 components, F(1) - the catalytic core - and F(0) - the membrane proton channel. F(1) has five subunits: alpha(3), beta(3), gamma(1), delta(1), epsilon(1). F(0) has three main subunits: a(1), b(2) and c(10-14). The alpha and beta chains form an alternating ring which encloses part of the gamma chain. F(1) is attached to F(0) by a central stalk formed by the gamma and epsilon chains, while a peripheral stalk is formed by the delta and b chains.

The protein localises to the cell inner membrane. Its function is as follows. F(1)F(0) ATP synthase produces ATP from ADP in the presence of a proton or sodium gradient. F-type ATPases consist of two structural domains, F(1) containing the extramembraneous catalytic core and F(0) containing the membrane proton channel, linked together by a central stalk and a peripheral stalk. During catalysis, ATP synthesis in the catalytic domain of F(1) is coupled via a rotary mechanism of the central stalk subunits to proton translocation. Functionally, component of the F(0) channel, it forms part of the peripheral stalk, linking F(1) to F(0). In Anaeromyxobacter dehalogenans (strain 2CP-C), this protein is ATP synthase subunit b.